The sequence spans 242 residues: Zinc-finger homeodomain protein 11 (242 aa).

The ZF-HD dimerization-type; degenerate zinc-finger motif lies at 31–82 (YKECLKNHAANLGGHALDGCGEFMPSPTATSTDPSSLRCAACGCHRNFHRRD). Disordered stretches follow at residues 83-109 (PSEN…SRHV) and 135-161 (PGPS…RTRT). The segment at residues 156 to 213 (RKRTRTKFTPEQKIKMRAFAEKAGWKINGCDEKSVREFCNEVGIERGVLKVWMHNNKY) is a DNA-binding region (homeobox; atypical).

As to quaternary structure, homo- and heterodimer with other ZFHD proteins. Interacts with HIPP20, HIPP21, HIPP22, HIPP23, HIPP24, HIPP26, HIPP27, HIPP30 and MED25 (via ACID domain). Interacts with NAC019, NAC055 and NAC072 (via NAC binding domain). Binds to ZHD1, ZHD2, ZHD3, ZHD4, ZHD5, ZHD6, ZHD7, ZHD8, ZHD9, ZHD12, ZHD13 and ZHD14. As to expression, expressed in roots, inflorescences, open flowers and seeds. Detected in stems and seedlings.

Its subcellular location is the nucleus. Its function is as follows. Transcription factor involved in the up-regulation of several stress-inducible genes. Acts as a transcriptional activator by interacting with MED25 and NAC proteins. Involved in increased drought tolerance. This chain is Zinc-finger homeodomain protein 11 (ZHD11), found in Arabidopsis thaliana (Mouse-ear cress).